The chain runs to 1217 residues: ATP-dependent helicase/nuclease subunit A (1217 aa).

Residues 10–475 enclose the UvrD-like helicase ATP-binding domain; sequence VIWTDAQWQS…IDLSQNFRSR (466 aa). Residue 31–38 coordinates ATP; sequence AAAGSGKT. The UvrD-like helicase C-terminal domain maps to 476–786; the sequence is KEVLSTTNYI…RMMTIHSSKG (311 aa).

Belongs to the helicase family. AddA subfamily. As to quaternary structure, heterodimer of AddA and AddB/RexB. Requires Mg(2+) as cofactor.

It carries out the reaction Couples ATP hydrolysis with the unwinding of duplex DNA by translocating in the 3'-5' direction.. It catalyses the reaction ATP + H2O = ADP + phosphate + H(+). Functionally, the heterodimer acts as both an ATP-dependent DNA helicase and an ATP-dependent, dual-direction single-stranded exonuclease. Recognizes the chi site generating a DNA molecule suitable for the initiation of homologous recombination. The AddA nuclease domain is required for chi fragment generation; this subunit has the helicase and 3' -&gt; 5' nuclease activities. This Staphylococcus aureus (strain MRSA252) protein is ATP-dependent helicase/nuclease subunit A.